The following is a 679-amino-acid chain: TBC1 domain family member 23 (679 aa).

One can recognise a Rab-GAP TBC domain in the interval 38–219; the sequence is QLPADLRAKV…AIWDGYLQQA (182 aa). In terms of domain architecture, Rhodanese spans 327-439; it reads EGVRFFVVDC…LQQHLADINV (113 aa). Positions 454–468 are enriched in low complexity; that stretch reads SGSRSSINSSVDGDS. The tract at residues 454–478 is disordered; the sequence is SGSRSSINSSVDGDSPNGSSDGKGV.

It is found in the golgi apparatus. Its subcellular location is the trans-Golgi network. Putative Rab GTPase-activating protein which plays a role in vesicular trafficking. Involved in endosome-to-Golgi trafficking. Acts as a bridging protein by binding simultaneously to golgins, located at the trans-Golgi, and to the WASH complex, located on endosome-derived vesicles. Plays a role in brain development. May act as a general inhibitor of innate immunity signaling. The protein is TBC1 domain family member 23 (TBC1D23) of Gallus gallus (Chicken).